The chain runs to 102 residues: Small ribosomal subunit protein uS10 (102 aa).

This sequence belongs to the universal ribosomal protein uS10 family. As to quaternary structure, part of the 30S ribosomal subunit.

Its function is as follows. Involved in the binding of tRNA to the ribosomes. This Lactobacillus delbrueckii subsp. bulgaricus (strain ATCC 11842 / DSM 20081 / BCRC 10696 / JCM 1002 / NBRC 13953 / NCIMB 11778 / NCTC 12712 / WDCM 00102 / Lb 14) protein is Small ribosomal subunit protein uS10.